A 405-amino-acid chain; its full sequence is Deoxyguanosinetriphosphate triphosphohydrolase-like protein (405 aa).

Residues 75–219 enclose the HD domain; sequence RLTHTIEVAQ…AAIADDIAYN (145 aa).

Belongs to the dGTPase family. Type 2 subfamily.

This is Deoxyguanosinetriphosphate triphosphohydrolase-like protein from Sinorhizobium medicae (strain WSM419) (Ensifer medicae).